Reading from the N-terminus, the 194-residue chain is Protein GrpE 1 (194 aa).

The tract at residues 1 to 22 (MIHNEEEQLEKKIEKNQDPKIN) is disordered.

It belongs to the GrpE family. As to quaternary structure, homodimer.

Its subcellular location is the cytoplasm. In terms of biological role, participates actively in the response to hyperosmotic and heat shock by preventing the aggregation of stress-denatured proteins, in association with DnaK and GrpE. It is the nucleotide exchange factor for DnaK and may function as a thermosensor. Unfolded proteins bind initially to DnaJ; upon interaction with the DnaJ-bound protein, DnaK hydrolyzes its bound ATP, resulting in the formation of a stable complex. GrpE releases ADP from DnaK; ATP binding to DnaK triggers the release of the substrate protein, thus completing the reaction cycle. Several rounds of ATP-dependent interactions between DnaJ, DnaK and GrpE are required for fully efficient folding. In Buchnera aphidicola subsp. Acyrthosiphon pisum (strain APS) (Acyrthosiphon pisum symbiotic bacterium), this protein is Protein GrpE 1.